The chain runs to 273 residues: uncharacterized protein (273 aa).

Its subcellular location is the virion. This is an uncharacterized protein from Acanthamoeba polyphaga (Amoeba).